We begin with the raw amino-acid sequence, 88 residues long: MLHSVQKTDIIQKYAIHDGDTGSPEVQIALLSERINQLQEHFRTHQKDHHSRRGLLKLVSQRRRQLDYLKRVDIERYRSLINRLNLRK.

The protein belongs to the universal ribosomal protein uS15 family. In terms of assembly, part of the 30S ribosomal subunit. Forms a bridge to the 50S subunit in the 70S ribosome, contacting the 23S rRNA.

In terms of biological role, one of the primary rRNA binding proteins, it binds directly to 16S rRNA where it helps nucleate assembly of the platform of the 30S subunit by binding and bridging several RNA helices of the 16S rRNA. Forms an intersubunit bridge (bridge B4) with the 23S rRNA of the 50S subunit in the ribosome. In Sorangium cellulosum (strain So ce56) (Polyangium cellulosum (strain So ce56)), this protein is Small ribosomal subunit protein uS15.